Reading from the N-terminus, the 452-residue chain is Na(+)/H(+) antiporter NhaA (452 aa).

Transmembrane regions (helical) follow at residues 23–43, 71–91, 108–128, 136–156, 165–185, 189–209, 216–236, 316–336, 349–369, 385–405, and 418–438; these read MMLFLASVLAVIMANSSLSTI, LLQFVNDVLMVIFFLAVGLEI, LPIVGAIGGMIVPVLFFLLVV, GAAIPMSTDIAFALAALAVLG, VFLTALAVADDIGGIIVIALF, HINIGMLAIAFGILFIMYLMG, LGLYFVCTFFVWLFFLQSGIH, IVGYFVLPLFAFANAGITLGG, VFLGLFVGKPLGIYFFTYGFV, LMAVSLFGGIGFTVSLFIATL, and EAKLGIFVASIFAAVVGIVTL.

Belongs to the NhaA Na(+)/H(+) (TC 2.A.33) antiporter family.

The protein resides in the cell inner membrane. It carries out the reaction Na(+)(in) + 2 H(+)(out) = Na(+)(out) + 2 H(+)(in). Functionally, na(+)/H(+) antiporter that extrudes sodium in exchange for external protons. The chain is Na(+)/H(+) antiporter NhaA from Porphyromonas gingivalis (strain ATCC 33277 / DSM 20709 / CIP 103683 / JCM 12257 / NCTC 11834 / 2561).